A 286-amino-acid polypeptide reads, in one-letter code: Hypersensitive-induced response protein 1 (286 aa).

Residue G2 is the site of N-myristoyl glycine attachment. The stretch at L114 to E190 forms a coiled coil.

Self-interacts and forms heteromers. Interacts with NB-LRR class of R proteins before R proteins (e.g. RPS2 or RPM1) are activated by the effectors. Interacts with LRR1.

The protein resides in the cell membrane. Its function is as follows. Positive regulator of hypersensitive response (HR)-like cell death. May be involved in potassium ion channel regulation. In Arabidopsis thaliana (Mouse-ear cress), this protein is Hypersensitive-induced response protein 1.